Here is a 409-residue protein sequence, read N- to C-terminus: MECALDAQSLISISLRKIHSSRTQRGGIKLHKNLLVSYVLRNARQLYLSERYAELYRRQQQQQQQQQQPPHHQHQHLAYAAPGMPASAADFGPLQLGGGGDAEAREPVARHQLHQLHQLHQLHLQQQLHQHQHPAPRGCTAAAPVAVAGAPAGCAGALSELPGCAALQPPHGAPHRGQHLEPLQPGPAPLPPPAPAALCPRDPRVPAACSAPSAPPGAAPPTVAASSPPASPAPSSSPGFYRGAYPAPSDFGVHCSSQTTVLDLDTHVVTTVENGYLHQDCCASAHCPCCGQGAPGPGLASAAGCKRKYYPGQEEEDDEEEDAGDLGAEPPGGTPFAPCKRARFEDFCPDSSPDASNISNLISIFGSGFSGLVSRQPDSSEQPPPLNGQLCAKQALASLGAWTRAIVAF.

Disordered stretches follow at residues 168–237 (QPPH…PSSS) and 312–335 (GQEE…GGTP). Residues 184 to 195 (QPGPAPLPPPAP) show a composition bias toward pro residues. Composition is skewed to low complexity over residues 196–212 (AALC…CSAP) and 220–237 (PPTV…PSSS). Positions 313–324 (QEEEDDEEEDAG) are enriched in acidic residues.

It belongs to the IER family.

This is Immediate early response gene 5-like protein (Ier5l) from Rattus norvegicus (Rat).